The sequence spans 269 residues: Gene 69 protein (269 aa).

In Mycobacterium (Mycobacteriophage D29), this protein is Gene 69 protein (69).